A 1410-amino-acid chain; its full sequence is Non-secreted LysM effector LysM15 (1410 aa).

2 consecutive LysM domains span residues 1179–1225 (TTYT…DICM) and 1231–1277 (TQYT…EILG). Residues 1291–1303 (TTGDGITTTPGNG) are compositionally biased toward low complexity. The segment at 1291–1317 (TTGDGITTTPGNGEYAQGVVSPPENST) is disordered. Positions 1328–1375 (RWYSATADDLCVQICLKSGVSAKLFKAANPSLAADCDNSLIAGDAYCV) constitute a LysM 3 domain.

This sequence belongs to the secreted LysM effector family.

Non-secreted LysM effector that might be involved in manipulation of host defenses for successful infection. This is Non-secreted LysM effector LysM15 from Penicillium expansum (Blue mold rot fungus).